A 137-amino-acid polypeptide reads, in one-letter code: Envelope glycoprotein L (137 aa).

An N-terminal signal peptide occupies residues 1-25; the sequence is MRTVGVFLATCLVTIFVLPTWGNWA. The segment at 23–128 is interaction with gH; the sequence is NWAYPCCHVT…SVEDLFGANL (106 aa). Cystine bridges form between cysteine 28–cysteine 56 and cysteine 29–cysteine 79.

The protein belongs to the herpesviridae glycoprotein L family. Interacts with glycoprotein H (gH); this interaction is necessary for the correct processing and cell surface expression of gH. The heterodimer gH/gL seems to interact with gB trimers during fusion. The heterodimer gH/gL interacts with host EPHA2 to facilitate virus internalization and fusion.

It is found in the virion membrane. Its subcellular location is the host cell membrane. The protein resides in the host Golgi apparatus. It localises to the host trans-Golgi network. The heterodimer glycoprotein H-glycoprotein L is required for the fusion of viral and plasma membranes leading to virus entry into the host cell. Acts as a functional inhibitor of gH and maintains gH in an inhibited form. Upon binding to host integrins, gL dissociates from gH leading to activation of the viral fusion glycoproteins gB and gH. The heterodimer gH/gL targets also host EPHA2 to promote viral entry. This chain is Envelope glycoprotein L, found in Epstein-Barr virus (strain AG876) (HHV-4).